Consider the following 457-residue polypeptide: Cell division protein FtsA (457 aa).

This sequence belongs to the FtsA/MreB family. Self-interacts. Interacts with FtsZ.

It localises to the cell membrane. Its function is as follows. Cell division protein that is involved in the assembly of the Z ring. May serve as a membrane anchor for the Z ring. Increased expression restores growth to a PBP2b (penA) deletion strain as well as mreCD and rodA deletions, but not gpsB or rodZ deletions. Does not restore wild-type cell morphology to the penA deletion. This Streptococcus pneumoniae serotype 2 (strain D39 / NCTC 7466) protein is Cell division protein FtsA.